The sequence spans 318 residues: Aspartate carbamoyltransferase catalytic subunit (318 aa).

Positions 56 and 57 each coordinate carbamoyl phosphate. L-aspartate is bound at residue Lys-84. Residues Arg-106, His-143, and Gln-146 each coordinate carbamoyl phosphate. The L-aspartate site is built by Arg-176 and Arg-230. 2 residues coordinate carbamoyl phosphate: Gly-271 and Pro-272.

This sequence belongs to the aspartate/ornithine carbamoyltransferase superfamily. ATCase family. Heterododecamer (2C3:3R2) of six catalytic PyrB chains organized as two trimers (C3), and six regulatory PyrI chains organized as three dimers (R2).

It carries out the reaction carbamoyl phosphate + L-aspartate = N-carbamoyl-L-aspartate + phosphate + H(+). The protein operates within pyrimidine metabolism; UMP biosynthesis via de novo pathway; (S)-dihydroorotate from bicarbonate: step 2/3. Functionally, catalyzes the condensation of carbamoyl phosphate and aspartate to form carbamoyl aspartate and inorganic phosphate, the committed step in the de novo pyrimidine nucleotide biosynthesis pathway. The sequence is that of Aspartate carbamoyltransferase catalytic subunit from Mycobacterium avium (strain 104).